We begin with the raw amino-acid sequence, 235 residues long: Protein C1orf43 homolog (235 aa).

The chain crosses the membrane as a helical span at residues 11–31 (VNVVLVMAYGSLVFVLLFIFV).

Its subcellular location is the membrane. The protein resides in the golgi apparatus. It localises to the mitochondrion. In terms of biological role, general regulator of phagocytosis. Required to uptake Gram negative bacterium by macrophages. This is Protein C1orf43 homolog from Rattus norvegicus (Rat).